The chain runs to 383 residues: MHC class I polypeptide-related sequence A (383 aa).

The first 23 residues, 1–23, serve as a signal peptide directing secretion; the sequence is MGLGPVFLLLAGIFPFAPPGAAA. Residues 24–307 lie on the Extracellular side of the membrane; sequence EPHSLRYNLT…GKVLVLQSHW (284 aa). The N-linked (GlcNAc...) asparagine glycan is linked to Asn-31. Residues Cys-59 and Cys-64 are joined by a disulfide bond. N-linked (GlcNAc...) asparagine glycosylation occurs at Asn-79. A disulfide bond links Cys-119 and Cys-187. Positions 207–296 constitute an Ig-like C1-type domain; the sequence is PMVNVTRSEA…SGNHSTHPVP (90 aa). N-linked (GlcNAc...) asparagine glycans are attached at residues Asn-210, Asn-220, and Asn-261. Cys-225 and Cys-282 are joined by a disulfide. The helical transmembrane segment at 308-328 threads the bilayer; that stretch reads QTFHVSAVAAAAIFVIIIFYV. Over 329-383 the chain is Cytoplasmic; that stretch reads RCCKKKTSAAEGPELVSLQVLDQHPVGTSDHRDATQLGFQPLMSDLGSTGSTEGA. Residues Cys-330 and Cys-331 are each lipidated (S-palmitoyl cysteine).

The protein belongs to the MHC class I family. MIC subfamily. In terms of assembly, unlike classical MHC class I molecules, does not form a heterodimer with beta-2-microglobulin. Binds as a monomer to a KLRK1/NKG2D homodimer. KLRK1 forms a complex with HCST/DAP10 in which KLRK1 binds MICA while HCST acts as an adapter molecule which enables signal transduction. Interacts with PDIA6 on the surface of tumor cells, leading to disulfide bond reduction which is required for release of MICA from tumor cells. As to quaternary structure, (Microbial infection) Interacts with human cytomegalovirus/HHV-5 protein UL142. Post-translationally, N-glycosylated. Glycosylation is not essential for interaction with KLRK1/NKG2D but enhances complex formation. In terms of processing, proteolytically cleaved and released from the cell surface of tumor cells which impairs KLRK1/NKG2D expression and T-cell activation. Palmitoylated on cysteine residues in the cytoplasmic tail leading to its association with membrane microdomains enriched in cholesterol. Post-translationally, N-glycosylation is necessary for cell surface expression. In terms of processing, (Microbial infection) Ubiquitinated by human herpesvirus 8 protein K5, leading to degradation. Widely expressed with the exception of the central nervous system where it is absent. Expressed predominantly in gastric epithelium and also in monocytes, keratinocytes, endothelial cells, fibroblasts and in the outer layer of Hassal's corpuscles within the medulla of normal thymus. In skin, expressed mainly in the keratin layers, basal cells, ducts and follicles. Also expressed in many, but not all, epithelial tumors of lung, breast, kidney, ovary, prostate and colon. In thyomas, overexpressed in cortical and medullar epithelial cells. Tumors expressing MICA display increased levels of gamma delta T-cells.

The protein localises to the cell membrane. It is found in the cytoplasm. Widely expressed membrane-bound protein which acts as a ligand to stimulate an activating receptor KLRK1/NKG2D, expressed on the surface of essentially all human natural killer (NK), gammadelta T and CD8 alphabeta T-cells. Up-regulated in stressed conditions, such as viral and bacterial infections or DNA damage response, serves as signal of cellular stress, and engagement of KLRK1/NKG2D by MICA triggers NK-cells resulting in a range of immune effector functions, such as cytotoxicity and cytokine production. This is MHC class I polypeptide-related sequence A from Homo sapiens (Human).